The sequence spans 202 residues: Large ribosomal subunit protein bL25 (202 aa).

Belongs to the bacterial ribosomal protein bL25 family. CTC subfamily. In terms of assembly, part of the 50S ribosomal subunit; part of the 5S rRNA/L5/L18/L25 subcomplex. Contacts the 5S rRNA. Binds to the 5S rRNA independently of L5 and L18.

Functionally, this is one of the proteins that binds to the 5S RNA in the ribosome where it forms part of the central protuberance. In Burkholderia ambifaria (strain MC40-6), this protein is Large ribosomal subunit protein bL25.